The chain runs to 339 residues: Anthranilate phosphoribosyltransferase (339 aa).

5-phospho-alpha-D-ribose 1-diphosphate-binding positions include G81, 84 to 85, T89, 91 to 94, 109 to 117, and A121; these read GD, NIST, and KHGNRNLSS. G81 is a binding site for anthranilate. Mg(2+) is bound at residue S93. N112 is a binding site for anthranilate. R167 is an anthranilate binding site. Residues D226 and E227 each coordinate Mg(2+).

This sequence belongs to the anthranilate phosphoribosyltransferase family. In terms of assembly, homodimer. Mg(2+) is required as a cofactor.

The enzyme catalyses N-(5-phospho-beta-D-ribosyl)anthranilate + diphosphate = 5-phospho-alpha-D-ribose 1-diphosphate + anthranilate. It functions in the pathway amino-acid biosynthesis; L-tryptophan biosynthesis; L-tryptophan from chorismate: step 2/5. Catalyzes the transfer of the phosphoribosyl group of 5-phosphorylribose-1-pyrophosphate (PRPP) to anthranilate to yield N-(5'-phosphoribosyl)-anthranilate (PRA). The polypeptide is Anthranilate phosphoribosyltransferase (Roseobacter denitrificans (strain ATCC 33942 / OCh 114) (Erythrobacter sp. (strain OCh 114))).